The primary structure comprises 363 residues: tRNA-specific 2-thiouridylase MnmA (363 aa).

Residues 13-20 (GLSGGVDS) and Met39 contribute to the ATP site. The interaction with target base in tRNA stretch occupies residues 99 to 101 (NPD). The active-site Nucleophile is the Cys104. The cysteines at positions 104 and 200 are disulfide-linked. An ATP-binding site is contributed by Gly128. Residues 150–152 (KDQ) form an interaction with tRNA region. The Cysteine persulfide intermediate role is filled by Cys200. The segment at 310–311 (RY) is interaction with tRNA.

The protein belongs to the MnmA/TRMU family.

The protein resides in the cytoplasm. It carries out the reaction S-sulfanyl-L-cysteinyl-[protein] + uridine(34) in tRNA + AH2 + ATP = 2-thiouridine(34) in tRNA + L-cysteinyl-[protein] + A + AMP + diphosphate + H(+). Catalyzes the 2-thiolation of uridine at the wobble position (U34) of tRNA, leading to the formation of s(2)U34. In Ruthia magnifica subsp. Calyptogena magnifica, this protein is tRNA-specific 2-thiouridylase MnmA.